The chain runs to 21 residues: GLLDFVTGVGKDIFAQLIKQI.

Isoleucine 21 bears the Isoleucine amide mark.

As to expression, expressed by the skin dorsal glands.

Its subcellular location is the secreted. Has hemolytic activity against human erythrocytes (HC50=14.3 uM). Has antibacterial activity against the Gram-positive bacterium S.aureus ATCC 25923 (MIC=64 uM) and the Gram-negative bacterium E.coli ATCC 25922 (MIC=64 uM). This is Ocellatin-4 from Leptodactylus ocellatus (Argus frog).